Consider the following 73-residue polypeptide: Serine rich endogenous peptide 14 (73 aa).

Residues 1–31 form the signal peptide; sequence MAAKTSNLVALLLSLFLLLLSISSQVGLGEA. Positions 44–73 are disordered; that stretch reads VSHPSPPPPHRSMAPPIFVPPSTSHKGQGP. Residues 59–73 carry the SCOOP motif motif; that stretch reads PIFVPPSTSHKGQGP. A compositionally biased stretch (polar residues) spans 64 to 73; the sequence is PSTSHKGQGP. A SxS motif essential for MIK2 binding motif is present at residues 65 to 67; that stretch reads STS.

It belongs to the serine rich endogenous peptide (SCOOP) phytocytokine family. Interacts with MIK2 (via extracellular leucine-rich repeat domain); this interaction triggers the formation of complex between MIK2 and the BAK1/SERK3 and SERK4 coreceptors, and subsequent BAK1 activation by phosphorylation. In terms of tissue distribution, mostly expressed in seedlings shoots and leaves, and, to a lower extent, in roots, stems, siliques, seeds and flowers.

It is found in the cell membrane. Its subcellular location is the secreted. It localises to the extracellular space. The protein resides in the apoplast. Functionally, brassicaceae-specific phytocytokine (plant endogenous peptide released into the apoplast) perceived by MIK2 in a BAK1/SERK3 and SERK4 coreceptors-dependent manner, that modulates various physiological and antimicrobial processes including growth prevention and reactive oxygen species (ROS) response regulation. Inhibits root growth and regulates root meristems. Prevents general growth and development. Exhibits antibacterial effects against Pseudomonas syringae pv. tomato DC3000, Ralstonia solanacearum, Bacillus subtilis and Agrobacterium tumefaciens, thus being an antimicrobial peptide (AMP). In Arabidopsis thaliana (Mouse-ear cress), this protein is Serine rich endogenous peptide 14.